A 232-amino-acid polypeptide reads, in one-letter code: 2,3,4,5-tetrahydropyridine-2,6-dicarboxylate N-acetyltransferase (232 aa).

This sequence belongs to the transferase hexapeptide repeat family. DapH subfamily.

It carries out the reaction (S)-2,3,4,5-tetrahydrodipicolinate + acetyl-CoA + H2O = L-2-acetamido-6-oxoheptanedioate + CoA. It participates in amino-acid biosynthesis; L-lysine biosynthesis via DAP pathway; LL-2,6-diaminopimelate from (S)-tetrahydrodipicolinate (acetylase route): step 1/3. Catalyzes the transfer of an acetyl group from acetyl-CoA to tetrahydrodipicolinate. This chain is 2,3,4,5-tetrahydropyridine-2,6-dicarboxylate N-acetyltransferase, found in Streptococcus gordonii (strain Challis / ATCC 35105 / BCRC 15272 / CH1 / DL1 / V288).